The chain runs to 656 residues: Leucine-rich repeat-containing protein 43 (656 aa).

The span at 1–13 (MEASYESESESES) shows a compositional bias: acidic residues. Positions 1–25 (MEASYESESESESEAGPGTQRPGTG) are disordered. LRR repeat units lie at residues 150-170 (KLEELVLSANRIKEVDATNLP), 172-193 (TLKVLELYGNEISSMECLCAHP), 196-215 (GLQHLGLGHNKLLGPLESLY), and 223-244 (NLVSLDLGFNDLTDLQSMVTSL). In terms of domain architecture, LRRCT spans 258–296 (NPLALVPYYRGLTIDSLAQLCVLDDITVSPNEKHLFRGL). The interval 512-554 (LSAKKGKGEKDKKGKEKDRTGKGEKEPAKEWKVLKKKKEPPKE) is disordered. Over residues 517–544 (GKGEKDKKGKEKDRTGKGEKEPAKEWKV) the composition is skewed to basic and acidic residues.

The chain is Leucine-rich repeat-containing protein 43 (LRRC43) from Homo sapiens (Human).